Here is an 843-residue protein sequence, read N- to C-terminus: Protein P (843 aa).

Positions 1–177 are terminal protein domain (TP); it reads MPLSYQHFRR…FCGSPYSWEQ (177 aa). The tract at residues 178-346 is spacer; it reads ELQHGSTSLN…YCLSHIINLL (169 aa). Residues 228–316 are disordered; that stretch reads KQGQLANGKQ…VPPSTVGSES (89 aa). 3 stretches are compositionally biased toward polar residues: residues 262–276, 286–299, and 307–316; these read TGHS…TSRF, NPSL…TSTG, and VPPSTVGSES. The tract at residues 347 to 690 is polymerase/reverse transcriptase domain (RT); the sequence is EDWGPCYEHG…YMNLYPVARQ (344 aa). The region spanning 357-600 is the Reverse transcriptase domain; sequence EHHIRTPRTP…YSLHFMGYII (244 aa). Residues aspartate 429, aspartate 551, and aspartate 552 each contribute to the Mg(2+) site.

The protein belongs to the hepadnaviridae P protein family.

The enzyme catalyses DNA(n) + a 2'-deoxyribonucleoside 5'-triphosphate = DNA(n+1) + diphosphate. It carries out the reaction Endonucleolytic cleavage to 5'-phosphomonoester.. Its activity is regulated as follows. Activated by host HSP70 and HSP40 in vitro to be able to bind the epsilon loop of the pgRNA. Because deletion of the RNase H region renders the protein partly chaperone-independent, the chaperones may be needed indirectly to relieve occlusion of the RNA-binding site by this domain. Inhibited by several reverse-transcriptase inhibitors: Lamivudine, Adefovir and Entecavir. Functionally, multifunctional enzyme that converts the viral RNA genome into dsDNA in viral cytoplasmic capsids. This enzyme displays a DNA polymerase activity that can copy either DNA or RNA templates, and a ribonuclease H (RNase H) activity that cleaves the RNA strand of RNA-DNA heteroduplexes in a partially processive 3'- to 5'-endonucleasic mode. Neo-synthesized pregenomic RNA (pgRNA) are encapsidated together with the P protein, and reverse-transcribed inside the nucleocapsid. Initiation of reverse-transcription occurs first by binding the epsilon loop on the pgRNA genome, and is initiated by protein priming, thereby the 5'-end of (-)DNA is covalently linked to P protein. Partial (+)DNA is synthesized from the (-)DNA template and generates the relaxed circular DNA (RC-DNA) genome. After budding and infection, the RC-DNA migrates in the nucleus, and is converted into a plasmid-like covalently closed circular DNA (cccDNA). The activity of P protein does not seem to be necessary for cccDNA generation, and is presumably released from (+)DNA by host nuclear DNA repair machinery. In Homo sapiens (Human), this protein is Protein P.